Consider the following 25-residue polypeptide: Ocellatin-1 (25 aa).

Val25 is modified (valine amide).

In terms of tissue distribution, expressed by the skin dorsal glands.

Its subcellular location is the secreted. Its function is as follows. Has hemolytic activity against human erythrocytes and antibacterial activity against the Gram-negative bacterium E.coli. In Leptodactylus ocellatus (Argus frog), this protein is Ocellatin-1.